A 536-amino-acid chain; its full sequence is 2-isopropylmalate synthase (536 aa).

The 266-residue stretch at 8–273 (VLIFDTTLRD…FFGKDSESPT (266 aa)) folds into the Pyruvate carboxyltransferase domain. Mn(2+) contacts are provided by D17, H208, H210, and N244. The regulatory domain stretch occupies residues 408 to 536 (KLHLVQVSCG…PQHDVVKANL (129 aa)).

The protein belongs to the alpha-IPM synthase/homocitrate synthase family. LeuA type 1 subfamily. As to quaternary structure, homodimer. The cofactor is Mn(2+).

The protein resides in the cytoplasm. The enzyme catalyses 3-methyl-2-oxobutanoate + acetyl-CoA + H2O = (2S)-2-isopropylmalate + CoA + H(+). It participates in amino-acid biosynthesis; L-leucine biosynthesis; L-leucine from 3-methyl-2-oxobutanoate: step 1/4. In terms of biological role, catalyzes the condensation of the acetyl group of acetyl-CoA with 3-methyl-2-oxobutanoate (2-ketoisovalerate) to form 3-carboxy-3-hydroxy-4-methylpentanoate (2-isopropylmalate). This chain is 2-isopropylmalate synthase, found in Prochlorococcus marinus (strain SARG / CCMP1375 / SS120).